The sequence spans 281 residues: Probable endonuclease 4 (281 aa).

H69, H109, E145, D179, H182, H216, D229, H231, and E261 together coordinate Zn(2+).

It belongs to the AP endonuclease 2 family. Zn(2+) is required as a cofactor.

The enzyme catalyses Endonucleolytic cleavage to 5'-phosphooligonucleotide end-products.. In terms of biological role, endonuclease IV plays a role in DNA repair. It cleaves phosphodiester bonds at apurinic or apyrimidinic (AP) sites, generating a 3'-hydroxyl group and a 5'-terminal sugar phosphate. The sequence is that of Probable endonuclease 4 from Pectobacterium carotovorum subsp. carotovorum (strain PC1).